A 192-amino-acid chain; its full sequence is BON1-associated protein 1 (192 aa).

The C2 domain occupies 1 to 119; the sequence is MIYFGRSIDN…RYSPEGHLNF (119 aa).

As to quaternary structure, interacts with BON1 (via VWA domain), BON2 and BON3. Expressed in roots, leaves, stems and flowers.

It localises to the membrane. Its function is as follows. Negative regulator of cell death and defense responses. Exhibits calcium-dependent phospholipid binding properties. The sequence is that of BON1-associated protein 1 (BAP1) from Arabidopsis thaliana (Mouse-ear cress).